The chain runs to 96 residues: Putative pterin-4-alpha-carbinolamine dehydratase (96 aa).

Belongs to the pterin-4-alpha-carbinolamine dehydratase family.

It carries out the reaction (4aS,6R)-4a-hydroxy-L-erythro-5,6,7,8-tetrahydrobiopterin = (6R)-L-erythro-6,7-dihydrobiopterin + H2O. The sequence is that of Putative pterin-4-alpha-carbinolamine dehydratase from Prochlorococcus marinus subsp. pastoris (strain CCMP1986 / NIES-2087 / MED4).